Consider the following 840-residue polypeptide: Phosphatidylglycerol lysyltransferase (840 aa).

Residues 1–8 (MTQELKSK) are Cytoplasmic-facing. Residues 9–29 (LLSFFKFIFATALFIFVIFTL) form a helical membrane-spanning segment. Over 30–52 (YRELSHINFKETFIQFGKINRLW) the chain is Extracellular. A helical membrane pass occupies residues 53–73 (LVLLFAGGGLSLILLSLYDII). Residues 74–89 (LVKALKLKMPLIRVFR) lie on the Cytoplasmic side of the membrane. The helical transmembrane segment at 90–110 (VSYIINALNSIIGFGGFIGAG) threads the bilayer. Topologically, residues 111 to 129 (VRAFVYKNYTNDTKKLVQY) are extracellular. A helical membrane pass occupies residues 130–150 (ISIILVSMLTGLSLLSILVVL). At 151–161 (RIFNASHMIDE) the chain is on the cytoplasmic side. A helical membrane pass occupies residues 162 to 182 (ISWVRWILYIVALFLPIFIFY). The Extracellular portion of the chain corresponds to 183–200 (TVARPVDRNNRYMGVYCT). Residues 201–221 (VVSCVEWMAAATVLYFAALIV) traverse the membrane as a helical segment. The Cytoplasmic segment spans residues 222–229 (DIHISFMT). Residues 230 to 250 (FVGIFVIAALSGLVSFIPGGF) form a helical membrane-spanning segment. The Extracellular segment spans residues 251–270 (GAFDLVVLLGLKSLGISEEK). The helical transmembrane segment at 271–291 (ILLALVLYRFAYYFVPVMIAL) threads the bilayer. At 292–337 (ILSSFEFGNTAKKYLDNSKYFIPVKDFTSFLRSYQKDILAKVPSFS) the chain is on the cytoplasmic side. A helical membrane pass occupies residues 338-358 (LAILIFLTSIIFFINNLTIVY). Residues 359 to 366 (DGLYDGNH) are Extracellular-facing. A helical membrane pass occupies residues 367–387 (FAYYIALAVQTSACLLLILNV). Residues 388–392 (RGIYK) are Cytoplasmic-facing. The helical transmembrane segment at 393–413 (GSRRAIIYAFISIILIASATI) threads the bilayer. Topologically, residues 414–415 (YT) are extracellular. The helical transmembrane segment at 416–436 (YASFLLLSWLIIIFVLLILAY) threads the bilayer. Over 437–450 (QRAQVLKRPLRFKK) the chain is Cytoplasmic. Residues 451–471 (LAVMLLLSIFILYLNHILISG) traverse the membrane as a helical segment. At 472-489 (TLYALDVYHIEIDTSLLR) the chain is on the extracellular side. Residues 490 to 510 (YYFWMTIVIIMLLVGVIAWLF) traverse the membrane as a helical segment. At 511–840 (DYKYKCPHHS…LKVMRVIRHK (330 aa)) the chain is on the cytoplasmic side.

This sequence belongs to the LPG synthase family.

Its subcellular location is the cell membrane. It carries out the reaction L-lysyl-tRNA(Lys) + a 1,2-diacyl-sn-glycero-3-phospho-(1'-sn-glycerol) = a 1,2-diacyl-sn-glycero-3-phospho-1'-(3'-O-L-lysyl)-sn-glycerol + tRNA(Lys). Its function is as follows. Catalyzes the transfer of a lysyl group from L-lysyl-tRNA(Lys) to membrane-bound phosphatidylglycerol (PG), which produces lysylphosphatidylglycerol (LPG), a major component of the bacterial membrane with a positive net charge. LPG synthesis contributes to bacterial virulence as it is involved in the resistance mechanism against cationic antimicrobial peptides (CAMP) produces by the host's immune system (defensins, cathelicidins) and by the competing microorganisms (bacteriocins). In fact, the modification of anionic phosphatidylglycerol with positively charged L-lysine results in repulsion of the peptides. The protein is Phosphatidylglycerol lysyltransferase (mprF) of Staphylococcus epidermidis (strain ATCC 12228 / FDA PCI 1200).